A 464-amino-acid polypeptide reads, in one-letter code: Argininosuccinate lyase (464 aa).

Belongs to the lyase 1 family. Argininosuccinate lyase subfamily.

It localises to the cytoplasm. It catalyses the reaction 2-(N(omega)-L-arginino)succinate = fumarate + L-arginine. The protein operates within amino-acid biosynthesis; L-arginine biosynthesis; L-arginine from L-ornithine and carbamoyl phosphate: step 3/3. The chain is Argininosuccinate lyase from Pseudomonas paraeruginosa (strain DSM 24068 / PA7) (Pseudomonas aeruginosa (strain PA7)).